A 206-amino-acid chain; its full sequence is Large ribosomal subunit protein uL4 (206 aa).

The interval 47-75 is disordered; sequence GTQSAKTRAEVSGGGIKPWRQKGTGRARQ.

It belongs to the universal ribosomal protein uL4 family. Part of the 50S ribosomal subunit.

Functionally, one of the primary rRNA binding proteins, this protein initially binds near the 5'-end of the 23S rRNA. It is important during the early stages of 50S assembly. It makes multiple contacts with different domains of the 23S rRNA in the assembled 50S subunit and ribosome. Forms part of the polypeptide exit tunnel. This is Large ribosomal subunit protein uL4 from Clostridium botulinum (strain 657 / Type Ba4).